Reading from the N-terminus, the 2349-residue chain is Reducing polyketide synthase hmp8 (2349 aa).

Residues 9–435 form the Ketosynthase family 3 (KS3) domain; sequence HVPVAIIGLA…GTNGHVVLEA (427 aa). Active-site for beta-ketoacyl synthase activity residues include cysteine 182, histidine 317, and histidine 357. Positions 551–856 are malonyl-CoA:ACP transacylase (MAT) domain; the sequence is FVFTGQGAQW…SHNGIKNVAY (306 aa). An N-terminal hotdog fold region spans residues 930–1066; that stretch reads RSLIGAPVPM…GLVAIDYEES (137 aa). The PKS/mFAS DH domain maps to 930–1250; that stretch reads RSLIGAPVPM…TSELDMDSGK (321 aa). A dehydratase (DH) domain region spans residues 932–1244; that stretch reads LIGAPVPMMA…SVKDFRTSEL (313 aa). Histidine 962 acts as the Proton acceptor; for dehydratase activity in catalysis. Residues 1094–1250 are C-terminal hotdog fold; the sequence is PEHYAHDKFY…TSELDMDSGK (157 aa). Catalysis depends on aspartate 1160, which acts as the Proton donor; for dehydratase activity. The segment at 1641 to 1953 is enoyl reductase (ER) domain; the sequence is GLLDTLKFVP…QGKHRGKMVL (313 aa). The segment at 1977–2157 is ketoreductase (KR) domain; that stretch reads ATYLFVGGLG…ISVNLGIMRD (181 aa). The region spanning 2267-2344 is the Carrier domain; sequence EAAEIITDAL…SFAVKIAEKS (78 aa). At serine 2304 the chain carries O-(pantetheine 4'-phosphoryl)serine.

Its pathway is secondary metabolite biosynthesis. In terms of biological role, reducing polyketide synthase; part of the gene cluster that mediates the biosynthesis of hypothemycin, a resorcylic acid lactone (RAL) that irreversibly inhibits a subset of protein kinases with a conserved cysteine in the ATP binding site such as human ERK2. The first step is performed by both PKSs hmp3 and hmp8 and leads to the production of 7',8'-dehydrozearalenol (DHZ). The highly reducing PKS hpm8 synthesizes the reduced hexaketide (7S,11S,2E,8E)-7,11-dihydroxy-dodeca-2,8-dienoate, which is transferred downstream to the non-reducing PKS hpm3. Hpm3 then extends the reduced hexaketide to a nonaketide, after which regioselective cyclization and macrolactonization affords DHZ. The next step is the conversion of DHZ into aigialomycin C and is performed by the O-methyltransferase hmp5, the FAD-binding monooxygenase hmp7, and the cytochrome P450 monooxygenase hmp1. The wide substrate tolerance of the hmp5 and hmp7 implies that the reactions from DHZ to aigialomycin C can occur in any order. The steps from aigialomycin C to hypothemycin are less well established. The FAD-linked oxidoreductase hmp9 presumably catalyzes oxidation of the C-6' hydroxyl to a ketone. The timing of this oxidation is important, since the resulting enone functional group is a Michael acceptor that can react spontaneously with glutathione, an abundant metabolite in fungal cells. The glutathione S-transferase hmp2 catalyzes cis-trans isomerization of the 7',8' double bond with equilibrium favoring the trans isomer. The hpm6-encoded transporter might preferentially pump hypothemycin out of the cell relative to the trans isomer aigialomycin A. The cis-to-trans isomerization may be coupled with C-4' hydroxylation, since all known hypothemycin analogs containing the enone functional group also have hydroxyl groups at both C-4' and C-5'. In Hypomyces subiculosus (Nectria subiculosa), this protein is Reducing polyketide synthase hmp8.